A 99-amino-acid chain; its full sequence is Malonate decarboxylase acyl carrier protein (99 aa).

S25 is subject to O-(phosphoribosyl dephospho-coenzyme A)serine.

Belongs to the MdcC family. In terms of processing, covalently binds the prosthetic group of malonate decarboxylase.

The protein localises to the cytoplasm. Functionally, subunit of malonate decarboxylase, it is an acyl carrier protein to which acetyl and malonyl thioester residues are bound via a 2'-(5''-phosphoribosyl)-3'-dephospho-CoA prosthetic group and turn over during the catalytic mechanism. The sequence is that of Malonate decarboxylase acyl carrier protein from Azotobacter vinelandii (strain DJ / ATCC BAA-1303).